The chain runs to 92 residues: Small ribosomal subunit protein uS19 (92 aa).

It belongs to the universal ribosomal protein uS19 family.

Protein S19 forms a complex with S13 that binds strongly to the 16S ribosomal RNA. The polypeptide is Small ribosomal subunit protein uS19 (Sodalis glossinidius (strain morsitans)).